A 414-amino-acid chain; its full sequence is Probable solanesyl-diphosphate synthase 3, chloroplastic (414 aa).

The span at 1–23 (MAAPSSLASSSHLSRRATAAASP) shows a compositional bias: low complexity. Positions 1-36 (MAAPSSLASSSHLSRRATAAASPSIPPPSPPPPPQR) are disordered. The N-terminal 72 residues, 1-72 (MAAPSSLASS…KPGVAAVDVP (72 aa)), are a transit peptide targeting the chloroplast. Pro residues predominate over residues 24-35 (SIPPPSPPPPPQ). Isopentenyl diphosphate-binding residues include lysine 134, arginine 137, and histidine 172. Residues aspartate 179 and aspartate 183 each contribute to the Mg(2+) site. Arginine 188 serves as a coordination point for an all-trans-polyprenyl diphosphate. Residue arginine 189 coordinates isopentenyl diphosphate. Positions 265, 266, 303, and 320 each coordinate an all-trans-polyprenyl diphosphate.

This sequence belongs to the FPP/GGPP synthase family. Homodimer. Mg(2+) is required as a cofactor.

The protein localises to the plastid. The protein resides in the chloroplast. The enzyme catalyses 7 isopentenyl diphosphate + (2E)-geranyl diphosphate = all-trans-nonaprenyl diphosphate + 7 diphosphate. Involved in providing solanesyl diphosphate for plastoquinone-9 (PQ-9) formation. The chain is Probable solanesyl-diphosphate synthase 3, chloroplastic from Oryza sativa subsp. japonica (Rice).